The sequence spans 248 residues: 3-deoxy-manno-octulosonate cytidylyltransferase (248 aa).

This sequence belongs to the KdsB family.

It is found in the cytoplasm. The enzyme catalyses 3-deoxy-alpha-D-manno-oct-2-ulosonate + CTP = CMP-3-deoxy-beta-D-manno-octulosonate + diphosphate. It participates in nucleotide-sugar biosynthesis; CMP-3-deoxy-D-manno-octulosonate biosynthesis; CMP-3-deoxy-D-manno-octulosonate from 3-deoxy-D-manno-octulosonate and CTP: step 1/1. Its pathway is bacterial outer membrane biogenesis; lipopolysaccharide biosynthesis. Its function is as follows. Activates KDO (a required 8-carbon sugar) for incorporation into bacterial lipopolysaccharide in Gram-negative bacteria. The polypeptide is 3-deoxy-manno-octulosonate cytidylyltransferase (Chlorobium chlorochromatii (strain CaD3)).